The following is a 147-amino-acid chain: Large ribosomal subunit protein bL9 (147 aa).

This sequence belongs to the bacterial ribosomal protein bL9 family.

Its function is as follows. Binds to the 23S rRNA. This Thermodesulfovibrio yellowstonii (strain ATCC 51303 / DSM 11347 / YP87) protein is Large ribosomal subunit protein bL9.